A 389-amino-acid chain; its full sequence is 5-hydroxytryptamine receptor 1B (389 aa).

A disordered region spans residues 1–27 (MEETNTHCAPPPPAGSQTGVSQANLSS). At 1 to 45 (MEETNTHCAPPPPAGSQTGVSQANLSSAPPNCSTEGYIYQDSIAL) the chain is on the extracellular side. Polar residues predominate over residues 15-27 (GSQTGVSQANLSS). Residues Asn24 and Asn31 are each glycosylated (N-linked (GlcNAc...) asparagine). A helical membrane pass occupies residues 46 to 71 (PWKVLLILVLALFTLATTLSNAFVIA). Over 72-85 (TVYRTRKLHTPANY) the chain is Cytoplasmic. A helical transmembrane segment spans residues 86 to 110 (LIASLAVTDLLVSILVMPISTMYTV). At 111-118 (TGRWTLGQ) the chain is on the extracellular side. Residues 119–144 (VVCDFWLSSDITCCTASILHLCVIAL) traverse the membrane as a helical segment. An intrachain disulfide couples Cys121 to Cys198. Residues Asp128 and Thr133 each contribute to the ergotamine site. The DRY motif; important for ligand-induced conformation changes and signaling signature appears at 145–147 (DRY). Residues 145–164 (DRYWAITDAVEYSAKRTPKR) are Cytoplasmic-facing. A helical membrane pass occupies residues 165-183 (AAVMIALVWVFSISISLPP). Over 184–204 (FFWRQAKAEEEVSDCRVNTDH) the chain is Extracellular. Val200 is a binding site for ergotamine. A helical membrane pass occupies residues 205–228 (MLYTVYSTVGAFYFPTLLLIALYG). The Cytoplasmic segment spans residues 229–314 (RIYVEARSRI…AARERKATKT (86 aa)). Residues 258 to 271 (DSPGSTSSVTSVNS) are compositionally biased toward polar residues. The disordered stretch occupies residues 258 to 281 (DSPGSTSSVTSVNSRAPDVPSESG). A helical transmembrane segment spans residues 315–336 (LGIILGAFIVCWLPFFIISLVM). Over 337–346 (PICKDACWFH) the chain is Extracellular. Residues 347–369 (LAIFDFFTWLGYLNSLINPIIYT) form a helical membrane-spanning segment. The short motif at 364-368 (NPIIY) is the NPxxY motif; important for ligand-induced conformation changes and signaling element. The Cytoplasmic portion of the chain corresponds to 370–389 (MSNEDFKQAFHKLIRFKCTG). Cys387 carries S-palmitoyl cysteine lipidation.

This sequence belongs to the G-protein coupled receptor 1 family. Homodimer. Heterodimer with HTR1D. In terms of processing, phosphorylated. Desensitization of the receptor may be mediated by its phosphorylation. Palmitoylated.

The protein localises to the cell membrane. Functionally, G-protein coupled receptor for 5-hydroxytryptamine (serotonin). Also functions as a receptor for ergot alkaloid derivatives, various anxiolytic and antidepressant drugs and other psychoactive substances, such as lysergic acid diethylamide (LSD). Ligand binding causes a conformation change that triggers signaling via guanine nucleotide-binding proteins (G proteins) and modulates the activity of downstream effectors, such as adenylate cyclase. HTR1B is coupled to G(i)/G(o) G alpha proteins and mediates inhibitory neurotransmission by inhibiting adenylate cyclase activity. Arrestin family members inhibit signaling via G proteins and mediate activation of alternative signaling pathways. Regulates the release of 5-hydroxytryptamine, dopamine and acetylcholine in the brain, and thereby affects neural activity, nociceptive processing, pain perception, mood and behavior. Besides, plays a role in vasoconstriction of cerebral arteries. The polypeptide is 5-hydroxytryptamine receptor 1B (HTR1B) (Felis catus (Cat)).